We begin with the raw amino-acid sequence, 446 residues long: MALIIQKFGGTSVANVERIKKLVPIIKAEIAKNNQVIVVVSAMAGVTNQLVTLCNEVSSLNKRSQFAEYDVALSSGEIVTASLLALALQEEEIKAQSLLAWQLPIRTNNNYSKALVEFITTDLLEKYLQLKIIPIIAGFQGINKSNRVTTLGRGGSDTTAALIAAAMKADRCDIYTDVDGIFTADPRIIPNAKRIKEIDFLEMLELASSGAKVLHPRAVELVMRYKIDMRVLSTFSPNTEGTLITSKDTIPLVKSTYMEESALNTKHSTKIDIPEDASGSTYKLPIELALQNRYNMENCVVRCITSNKNLLKVSVNSISLSFLQVANMITYNNNCIEFMQEIENNIEYNFITNLTDKNNLQTLLTKCKNNKQIQDFTFDTEIATISLIGYGIKNDCKLLTMILSQLTQDNINVHMMQLSEVKITLLINDKDVEKTIFNLYNLFKIS.

An RPE1 insert domain is found at 250-294; that stretch reads IPLVKSTYMEESALNTKHSTKIDIPEDASGSTYKLPIELALQNRY.

It belongs to the aspartokinase family.

It carries out the reaction L-aspartate + ATP = 4-phospho-L-aspartate + ADP. It functions in the pathway amino-acid biosynthesis; L-lysine biosynthesis via DAP pathway; (S)-tetrahydrodipicolinate from L-aspartate: step 1/4. Its pathway is amino-acid biosynthesis; L-methionine biosynthesis via de novo pathway; L-homoserine from L-aspartate: step 1/3. It participates in amino-acid biosynthesis; L-threonine biosynthesis; L-threonine from L-aspartate: step 1/5. This chain is Aspartokinase (lysC), found in Rickettsia prowazekii (strain Madrid E).